Here is a 430-residue protein sequence, read N- to C-terminus: UDP-N-acetylglucosamine 1-carboxyvinyltransferase (430 aa).

A phosphoenolpyruvate-binding site is contributed by 22–23 (KN). Arginine 102 contributes to the UDP-N-acetyl-alpha-D-glucosamine binding site. The active-site Proton donor is the cysteine 126. At cysteine 126 the chain carries 2-(S-cysteinyl)pyruvic acid O-phosphothioketal. UDP-N-acetyl-alpha-D-glucosamine-binding positions include 131–135 (RPVDL), 172–175 (KVSV), aspartate 317, and isoleucine 339.

This sequence belongs to the EPSP synthase family. MurA subfamily.

The protein localises to the cytoplasm. The catalysed reaction is phosphoenolpyruvate + UDP-N-acetyl-alpha-D-glucosamine = UDP-N-acetyl-3-O-(1-carboxyvinyl)-alpha-D-glucosamine + phosphate. Its pathway is cell wall biogenesis; peptidoglycan biosynthesis. Its function is as follows. Cell wall formation. Adds enolpyruvyl to UDP-N-acetylglucosamine. This chain is UDP-N-acetylglucosamine 1-carboxyvinyltransferase, found in Rhizobium meliloti (strain 1021) (Ensifer meliloti).